A 74-amino-acid chain; its full sequence is MLEGAKLMGAGAATIALAGAAIGIGNVFSSLIHSVARNPSLAKQLFGYAILGFALTEAIALFALMMAFLILFVF.

2 helical membrane-spanning segments follow: residues Met8–Phe28 and Ile50–Ile70.

This sequence belongs to the ATPase C chain family. As to quaternary structure, F-type ATPases have 2 components, CF(1) - the catalytic core - and CF(0) - the membrane proton channel. CF(1) has five subunits: alpha(3), beta(3), gamma(1), delta(1), epsilon(1). CF(0) has three main subunits: a, b and c.

It is found in the mitochondrion membrane. In terms of biological role, this protein is one of the chains of the nonenzymatic membrane component (F0) of mitochondrial ATPase. In Solanum tuberosum (Potato), this protein is ATP synthase subunit 9, mitochondrial (ATP9).